The sequence spans 218 residues: Uracil-DNA glycosylase (218 aa).

The active-site Proton acceptor is the D68.

This sequence belongs to the uracil-DNA glycosylase (UDG) superfamily. UNG family. Homodimer. Interacts with protein OPG148. Component of the Uracil-DNA glycosylase(UDG)-OPG148-polymerase complex; OPG148 and UDG form a heterodimeric processivity factor that associates with OPG71 to form the processive polymerase holoenzyme.

The enzyme catalyses Hydrolyzes single-stranded DNA or mismatched double-stranded DNA and polynucleotides, releasing free uracil.. Functionally, plays an essential role in viral replication as a component of the DNA polymerase processivity factor. Excises uracil residues from the DNA which can arise as a result of misincorporation of dUMP residues by DNA polymerase or due to deamination of cytosine. The polypeptide is Uracil-DNA glycosylase (OPG116) (Vaccinia virus (strain Ankara) (VACV)).